The chain runs to 369 residues: Protein-glutamate methylesterase/protein-glutamine glutaminase 1 (369 aa).

Residues 11-128 (RVLIVDDSAA…DLERQEASIR (118 aa)) form the Response regulatory domain. D62 is subject to 4-aspartylphosphate. The segment at 136 to 168 (ATETTRRRSQPEPRPLAPGPKLTADEILPARPP) is disordered. In terms of domain architecture, CheB-type methylesterase spans 170 to 358 (PVPETMPVVC…LDRLAARIME (189 aa)). Active-site residues include S183, H209, and D305.

Belongs to the CheB family. In terms of processing, phosphorylated by CheA. Phosphorylation of the N-terminal regulatory domain activates the methylesterase activity.

It is found in the cytoplasm. It catalyses the reaction [protein]-L-glutamate 5-O-methyl ester + H2O = L-glutamyl-[protein] + methanol + H(+). It carries out the reaction L-glutaminyl-[protein] + H2O = L-glutamyl-[protein] + NH4(+). Functionally, involved in chemotaxis. Part of a chemotaxis signal transduction system that modulates chemotaxis in response to various stimuli. Catalyzes the demethylation of specific methylglutamate residues introduced into the chemoreceptors (methyl-accepting chemotaxis proteins or MCP) by CheR. Also mediates the irreversible deamidation of specific glutamine residues to glutamic acid. This chain is Protein-glutamate methylesterase/protein-glutamine glutaminase 1, found in Cereibacter sphaeroides (strain ATCC 17023 / DSM 158 / JCM 6121 / CCUG 31486 / LMG 2827 / NBRC 12203 / NCIMB 8253 / ATH 2.4.1.) (Rhodobacter sphaeroides).